Here is a 185-residue protein sequence, read N- to C-terminus: Ribosome-recycling factor (185 aa).

The protein belongs to the RRF family.

It is found in the cytoplasm. Its function is as follows. Responsible for the release of ribosomes from messenger RNA at the termination of protein biosynthesis. May increase the efficiency of translation by recycling ribosomes from one round of translation to another. The sequence is that of Ribosome-recycling factor from Campylobacter concisus (strain 13826).